We begin with the raw amino-acid sequence, 161 residues long: Cell division protein SepF 2 (161 aa).

Residues 19-47 are disordered; it reads EDSEKAPELSSSRETKTKNQNQSKSLLRS. The segment covering 21–35 has biased composition (basic and acidic residues); that stretch reads SEKAPELSSSRETKT.

This sequence belongs to the SepF family. As to quaternary structure, homodimer. Interacts with FtsZ.

Its subcellular location is the cytoplasm. Functionally, cell division protein that is part of the divisome complex and is recruited early to the Z-ring. Probably stimulates Z-ring formation, perhaps through the cross-linking of FtsZ protofilaments. Its function overlaps with FtsA. The protein is Cell division protein SepF 2 of Desulforamulus reducens (strain ATCC BAA-1160 / DSM 100696 / MI-1) (Desulfotomaculum reducens).